A 655-amino-acid polypeptide reads, in one-letter code: Protein nipi-3 (655 aa).

Residues 1–35 (MARTKCKTKTVANPRTGVRKTAKDLSEPVRQDAVS) form a disordered region. The span at 21 to 35 (TAKDLSEPVRQDAVS) shows a compositional bias: basic and acidic residues. Positions 200–470 (IGIFVIYGTG…NQVNGDFPEI (271 aa)) constitute a Protein kinase domain. ATP is bound by residues 206–214 (YGTGLVTRA) and lysine 235.

The protein belongs to the protein kinase superfamily. CAMK Ser/Thr protein kinase family. As to quaternary structure, may interact with transcription factor cebp-1 (via N-terminus). In terms of tissue distribution, expressed in epidermis, pharynx, intestine, a subset of head neurons and motoneurons.

The protein localises to the nucleus. Its function is as follows. Adapter protein that regulates different signaling pathways. Required for larval development and viability. Involved in negatively modulating pmk-1 p38/MAPK signaling. Involved in innate immunity, acting either in a manner dependent upon, or independent of, the pmk-1 or pmk-3 p38/MAPK pathways. Has a protective role in response to infection by the Gram-negative bacterium P.aeruginosa, acting by negatively modulating expression of cebp-1, and regulating the pmk-1 p38/MAPK pathway, leading to activation of transcription factor skn-1. Required to prevent P.aeruginosa toxin ToxA-mediated lethality, probably acting via modulating the effects of translational inhibition caused by the toxin. By regulating the up-regulation in the epidermis of antimicrobial peptides nlp-29 and nlp-31, plays a role in resistance to fungal infection. The sequence is that of Protein nipi-3 from Caenorhabditis elegans.